Here is a 108-residue protein sequence, read N- to C-terminus: Thiosulfate sulfurtransferase GlpE (108 aa).

The Rhodanese domain occupies 17–105 (HQGAAVLVDI…WHRRFPADVA (89 aa)). The active-site Cysteine persulfide intermediate is the Cys65.

It belongs to the GlpE family.

The protein resides in the cytoplasm. The enzyme catalyses thiosulfate + hydrogen cyanide = thiocyanate + sulfite + 2 H(+). It carries out the reaction thiosulfate + [thioredoxin]-dithiol = [thioredoxin]-disulfide + hydrogen sulfide + sulfite + 2 H(+). Its function is as follows. Transferase that catalyzes the transfer of sulfur from thiosulfate to thiophilic acceptors such as cyanide or dithiols. May function in a CysM-independent thiosulfate assimilation pathway by catalyzing the conversion of thiosulfate to sulfite, which can then be used for L-cysteine biosynthesis. In Salmonella choleraesuis (strain SC-B67), this protein is Thiosulfate sulfurtransferase GlpE.